The following is a 116-amino-acid chain: Holo-[acyl-carrier-protein] synthase (116 aa).

Mg(2+) is bound by residues aspartate 8 and glutamate 59.

The protein belongs to the P-Pant transferase superfamily. AcpS family. The cofactor is Mg(2+).

The protein resides in the cytoplasm. The enzyme catalyses apo-[ACP] + CoA = holo-[ACP] + adenosine 3',5'-bisphosphate + H(+). In terms of biological role, transfers the 4'-phosphopantetheine moiety from coenzyme A to a Ser of acyl-carrier-protein. The sequence is that of Holo-[acyl-carrier-protein] synthase from Staphylococcus saprophyticus subsp. saprophyticus (strain ATCC 15305 / DSM 20229 / NCIMB 8711 / NCTC 7292 / S-41).